The sequence spans 105 residues: Guanyl-specific ribonuclease U1 (105 aa).

Glutamine 1 carries the post-translational modification Pyrrolidone carboxylic acid. 2 disulfides stabilise this stretch: cysteine 8-cysteine 103 and cysteine 51-cysteine 87. Histidine 37 is an active-site residue. Glutamate 57 (proton acceptor) is an active-site residue. Histidine 92 (proton donor) is an active-site residue.

This sequence belongs to the ribonuclease N1/T1 family.

It carries out the reaction [RNA] containing guanosine + H2O = an [RNA fragment]-3'-guanosine-3'-phosphate + a 5'-hydroxy-ribonucleotide-3'-[RNA fragment].. This chain is Guanyl-specific ribonuclease U1, found in Ustilago sphaerogena (Smut fungus).